The sequence spans 290 residues: Bifunctional protein FolD 1 (290 aa).

NADP(+) is bound by residues 172 to 174 (GAS) and I238.

The protein belongs to the tetrahydrofolate dehydrogenase/cyclohydrolase family. As to quaternary structure, homodimer.

It catalyses the reaction (6R)-5,10-methylene-5,6,7,8-tetrahydrofolate + NADP(+) = (6R)-5,10-methenyltetrahydrofolate + NADPH. The catalysed reaction is (6R)-5,10-methenyltetrahydrofolate + H2O = (6R)-10-formyltetrahydrofolate + H(+). It participates in one-carbon metabolism; tetrahydrofolate interconversion. Catalyzes the oxidation of 5,10-methylenetetrahydrofolate to 5,10-methenyltetrahydrofolate and then the hydrolysis of 5,10-methenyltetrahydrofolate to 10-formyltetrahydrofolate. This chain is Bifunctional protein FolD 1, found in Pseudomonas putida (strain GB-1).